Consider the following 543-residue polypeptide: CTP synthase (543 aa).

The interval 1 to 267 (MKQTKYIFVT…LNPIAEILDL (267 aa)) is amidoligase domain. Ser-15 lines the CTP pocket. Ser-15 serves as a coordination point for UTP. Residues 16 to 21 (SLGKGI) and Asp-73 each bind ATP. Positions 73 and 141 each coordinate Mg(2+). CTP-binding positions include 148-150 (DIE), 188-193 (KTKPTQ), and Lys-224. UTP is bound by residues 188 to 193 (KTKPTQ) and Lys-224. Residues 292-543 (KIAFVGKYVD…IKAAINYEDN (252 aa)) form the Glutamine amidotransferase type-1 domain. Residue Gly-354 participates in L-glutamine binding. Catalysis depends on Cys-381, which acts as the Nucleophile; for glutamine hydrolysis. L-glutamine contacts are provided by residues 382-385 (LGMQ), Glu-405, and Arg-473. Catalysis depends on residues His-516 and Glu-518.

This sequence belongs to the CTP synthase family. As to quaternary structure, homotetramer.

It catalyses the reaction UTP + L-glutamine + ATP + H2O = CTP + L-glutamate + ADP + phosphate + 2 H(+). The catalysed reaction is L-glutamine + H2O = L-glutamate + NH4(+). It carries out the reaction UTP + NH4(+) + ATP = CTP + ADP + phosphate + 2 H(+). The protein operates within pyrimidine metabolism; CTP biosynthesis via de novo pathway; CTP from UDP: step 2/2. Its activity is regulated as follows. Allosterically activated by GTP, when glutamine is the substrate; GTP has no effect on the reaction when ammonia is the substrate. The allosteric effector GTP functions by stabilizing the protein conformation that binds the tetrahedral intermediate(s) formed during glutamine hydrolysis. Inhibited by the product CTP, via allosteric rather than competitive inhibition. Functionally, catalyzes the ATP-dependent amination of UTP to CTP with either L-glutamine or ammonia as the source of nitrogen. Regulates intracellular CTP levels through interactions with the four ribonucleotide triphosphates. The protein is CTP synthase of Campylobacter jejuni subsp. doylei (strain ATCC BAA-1458 / RM4099 / 269.97).